Reading from the N-terminus, the 81-residue chain is Mipartoxin-1A (81 aa).

An N-terminal signal peptide occupies residues 1 to 21 (MKTLLLTLVVVTIVCLDLGNS). 4 cysteine pairs are disulfide-bonded: Cys24-Cys42, Cys35-Cys61, Cys65-Cys73, and Cys74-Cys79.

It belongs to the three-finger toxin family. Short-chain subfamily. In terms of tissue distribution, expressed by the venom gland.

It is found in the secreted. Its function is as follows. Snake venom neurotoxin that blocks neuromuscular transmission, presenting a postsynaptic action through the nicotinic acetylcholine receptor (nAChR). Has no cytotoxic activity. This is Mipartoxin-1A from Micrurus mipartitus (Red-tailed coral snake).